Consider the following 319-residue polypeptide: Phospho-N-acetylmuramoyl-pentapeptide-transferase (319 aa).

10 helical membrane-spanning segments follow: residues 1-21, 53-73, 77-97, 117-137, 140-160, 172-192, 195-215, 221-241, 249-269, and 298-318; these read MSIL…FLLM, TMGG…VGAW, LNGT…IGMW, FLAQ…EGFQ, FGLT…MVGF, GLVT…ALVQ, TEVA…FPFN, IFMG…VALV, LIIG…VAYF, and GVFW…ILFL.

The protein belongs to the glycosyltransferase 4 family. MraY subfamily. The cofactor is Mg(2+).

It is found in the cell membrane. It carries out the reaction UDP-N-acetyl-alpha-D-muramoyl-L-alanyl-gamma-D-glutamyl-L-lysyl-D-alanyl-D-alanine + di-trans,octa-cis-undecaprenyl phosphate = Mur2Ac(oyl-L-Ala-gamma-D-Glu-L-Lys-D-Ala-D-Ala)-di-trans,octa-cis-undecaprenyl diphosphate + UMP. It functions in the pathway cell wall biogenesis; peptidoglycan biosynthesis. Catalyzes the initial step of the lipid cycle reactions in the biosynthesis of the cell wall peptidoglycan: transfers peptidoglycan precursor phospho-MurNAc-pentapeptide from UDP-MurNAc-pentapeptide onto the lipid carrier undecaprenyl phosphate, yielding undecaprenyl-pyrophosphoryl-MurNAc-pentapeptide, known as lipid I. The sequence is that of Phospho-N-acetylmuramoyl-pentapeptide-transferase from Limosilactobacillus fermentum (strain NBRC 3956 / LMG 18251) (Lactobacillus fermentum).